The chain runs to 251 residues: 2,3-bisphosphoglycerate-dependent phosphoglycerate mutase (251 aa).

Substrate-binding positions include 13–20, 26–27, R65, 92–95, K103, 119–120, and 186–187; these read RHGESEWN, TG, ERHY, RR, and GN. The Tele-phosphohistidine intermediate role is filled by H14. Catalysis depends on E92, which acts as the Proton donor/acceptor.

The protein belongs to the phosphoglycerate mutase family. BPG-dependent PGAM subfamily.

It catalyses the reaction (2R)-2-phosphoglycerate = (2R)-3-phosphoglycerate. The protein operates within carbohydrate degradation; glycolysis; pyruvate from D-glyceraldehyde 3-phosphate: step 3/5. Its function is as follows. Catalyzes the interconversion of 2-phosphoglycerate and 3-phosphoglycerate. The protein is 2,3-bisphosphoglycerate-dependent phosphoglycerate mutase of Rhodococcus opacus (strain B4).